The following is a 416-amino-acid chain: UDP-N-acetylmuramoylalanine--D-glutamate ligase (416 aa).

An ATP-binding site is contributed by 108–114; the sequence is GTTGKTT.

Belongs to the MurCDEF family.

It is found in the cytoplasm. The enzyme catalyses UDP-N-acetyl-alpha-D-muramoyl-L-alanine + D-glutamate + ATP = UDP-N-acetyl-alpha-D-muramoyl-L-alanyl-D-glutamate + ADP + phosphate + H(+). The protein operates within cell wall biogenesis; peptidoglycan biosynthesis. Its function is as follows. Cell wall formation. Catalyzes the addition of glutamate to the nucleotide precursor UDP-N-acetylmuramoyl-L-alanine (UMA). In Chlamydia trachomatis serovar A (strain ATCC VR-571B / DSM 19440 / HAR-13), this protein is UDP-N-acetylmuramoylalanine--D-glutamate ligase.